The chain runs to 149 residues: Calmodulin-1 (149 aa).

Residue A2 is modified to N-acetylalanine. EF-hand domains lie at 8–43 (DQIA…LGQN), 44–79 (PTEA…KMKD), 81–116 (DSEE…LGEK), and 117–149 (LTDE…MMAK). Ca(2+)-binding residues include D21, D23, D25, C27, E32, D57, D59, N61, T63, E68, D94, D96, N98, and E105. At K116 the chain carries N6,N6,N6-trimethyllysine. D130, D132, D134, Q136, and E141 together coordinate Ca(2+).

This sequence belongs to the calmodulin family.

Calmodulin mediates the control of a large number of enzymes, ion channels and other proteins by Ca(2+). Among the enzymes to be stimulated by the calmodulin-Ca(2+) complex are a number of protein kinases and phosphatases. In Oryza sativa subsp. indica (Rice), this protein is Calmodulin-1 (CAM1-1).